A 445-amino-acid polypeptide reads, in one-letter code: Phosphoglucosamine mutase (445 aa).

Catalysis depends on Ser-102, which acts as the Phosphoserine intermediate. Mg(2+) contacts are provided by Ser-102, Asp-241, Asp-243, and Asp-245. Ser-102 carries the post-translational modification Phosphoserine.

It belongs to the phosphohexose mutase family. Mg(2+) serves as cofactor. Post-translationally, activated by phosphorylation.

It carries out the reaction alpha-D-glucosamine 1-phosphate = D-glucosamine 6-phosphate. Functionally, catalyzes the conversion of glucosamine-6-phosphate to glucosamine-1-phosphate. The protein is Phosphoglucosamine mutase of Salmonella dublin (strain CT_02021853).